Reading from the N-terminus, the 389-residue chain is Chalcone synthase 2 (389 aa).

Residue Cys-164 is part of the active site.

Belongs to the thiolase-like superfamily. Chalcone/stilbene synthases family.

It catalyses the reaction (E)-4-coumaroyl-CoA + 3 malonyl-CoA + 3 H(+) = 2',4,4',6'-tetrahydroxychalcone + 3 CO2 + 4 CoA. Its pathway is secondary metabolite biosynthesis; flavonoid biosynthesis. In terms of biological role, the primary product of this enzyme is 4,2',4',6'-tetrahydroxychalcone (also termed naringenin-chalcone or chalcone) which can under specific conditions spontaneously isomerize into naringenin. The polypeptide is Chalcone synthase 2 (CHS2) (Trifolium subterraneum (Subterranean clover)).